A 434-amino-acid chain; its full sequence is MQVSVETTQGLERRLTISVPAEQIEKLVKDNVLREAKRARLPGFRPGKVPIGEINKRYGKAIRQDITGEVMQRNFIEAIVAEKLNPAGAPVFTPGSTEGDSFEFVATFEIYPEVVLTGLDSIAVEQPKAEVNDADVDVMIETLRKQHATFAPVERAAVADDKVKMNFIGSIDGEEFEGGKADDFELQLGSNRMIPGFETGIVGHKTGDEFEIEVTFPEDYHAENLKGKAAKFVITLTEVQAANLPEVNDEFASLFGIAEGGLDALKAEIRKNMTRELEQALKANVKEQVITGLLAANDIAIPKALVEGEVNVLRQQAMQRFGGQTENMPELPAELFTEQAERRVKIGLLLGEVIKTNELKAEDDRVNTLIESMASAYEDPSEVVSYYNSNKELMQNMRNVALEEQAVEALLKSSKVTVKDVAFEEFMNKATGRA.

In terms of domain architecture, PPIase FKBP-type spans 160-245 (DDKVKMNFIG…LTEVQAANLP (86 aa)).

This sequence belongs to the FKBP-type PPIase family. Tig subfamily.

Its subcellular location is the cytoplasm. The catalysed reaction is [protein]-peptidylproline (omega=180) = [protein]-peptidylproline (omega=0). In terms of biological role, involved in protein export. Acts as a chaperone by maintaining the newly synthesized protein in an open conformation. Functions as a peptidyl-prolyl cis-trans isomerase. This is Trigger factor from Shewanella frigidimarina (strain NCIMB 400).